A 282-amino-acid chain; its full sequence is Phosphatidylglycerol--prolipoprotein diacylglyceryl transferase (282 aa).

Transmembrane regions (helical) follow at residues 23-43 (IGPLAIHWYGLAYVAGILLGW), 71-91 (FIVWAALGVVLGGRLGYIFFY), 106-126 (IWNGGMSFHGGLTGTTIAMII), and 132-152 (GIPIWSLFDIVATVVPFGLFF). Residue Arg-154 coordinates a 1,2-diacyl-sn-glycero-3-phospho-(1'-sn-glycerol). Helical transmembrane passes span 189–209 (LYEAGLEGIVLLLVLAALVYG), 217–237 (GFITGVFVCGYALSRIFVEFF), and 252–272 (WLTMGMVLSSPMILLGLWAML).

It belongs to the Lgt family.

It is found in the cell inner membrane. The enzyme catalyses L-cysteinyl-[prolipoprotein] + a 1,2-diacyl-sn-glycero-3-phospho-(1'-sn-glycerol) = an S-1,2-diacyl-sn-glyceryl-L-cysteinyl-[prolipoprotein] + sn-glycerol 1-phosphate + H(+). It functions in the pathway protein modification; lipoprotein biosynthesis (diacylglyceryl transfer). Functionally, catalyzes the transfer of the diacylglyceryl group from phosphatidylglycerol to the sulfhydryl group of the N-terminal cysteine of a prolipoprotein, the first step in the formation of mature lipoproteins. This chain is Phosphatidylglycerol--prolipoprotein diacylglyceryl transferase, found in Rhizobium leguminosarum bv. trifolii (strain WSM2304).